Consider the following 499-residue polypeptide: Potassium voltage-gated channel subfamily A member 2 (499 aa).

Positions 1–26 are disordered; it reads MTVATGDPADEAAALPGHPQDTYDPE. The tract at residues 1–125 is tetramerization domain; sequence MTVATGDPAD…YELGEEAMEM (125 aa). Over 1–160 the chain is Cytoplasmic; the sequence is MTVATGDPAD…LLFEYPESSG (160 aa). The chain crosses the membrane as a helical span at residues 161–182; sequence PARIIAIVSVMVILISIVSFCL. Over 183-221 the chain is Extracellular; sequence ETLPIFRDENEDMHGSGVTFHTYSNSTIGYQQSTSFTDP. The N-linked (GlcNAc...) asparagine glycan is linked to N207. A helical transmembrane segment spans residues 222-243; it reads FFIVETLCIIWFSFEFLVRFFA. C244 is lipidated: S-palmitoyl cysteine. At 244–254 the chain is on the cytoplasmic side; sequence CPSKAGFFTNI. The helical transmembrane segment at 255–275 threads the bilayer; it reads MNIIDIVAIIPYFITLGTELA. The Extracellular portion of the chain corresponds to 276-289; that stretch reads EKPEDAQQGQQAMS. A helical; Voltage-sensor membrane pass occupies residues 290 to 310; the sequence is LAILRVIRLVRVFRIFKLSRH. At 311–325 the chain is on the cytoplasmic side; sequence SKGLQILGQTLKASM. Residues 312-325 are S4-S5 linker; it reads KGLQILGQTLKASM. The chain crosses the membrane as a helical span at residues 326–347; it reads RELGLLIFFLFIGVILFSSAVY. Residues 348-361 lie on the Extracellular side of the membrane; sequence FAEADERESQFPSI. The helical intramembrane region spans 362–373; the sequence is PDAFWWAVVSMT. Positions 374-379 match the Selectivity filter motif; the sequence is TVGYGD. An intramembrane segment occupies 374–381; it reads TVGYGDMV. The Extracellular segment spans residues 382 to 388; sequence PTTIGGK. The helical transmembrane segment at 389–417 threads the bilayer; it reads IVGSLCAIAGVLTIALPVPVIVSNFNYFY. Over 418 to 499 the chain is Cytoplasmic; that stretch reads HRETEGEEQA…VNITKMLTDV (82 aa). Residue Y429 is modified to Phosphotyrosine. 4 positions are modified to phosphoserine: S434, S440, S441, and S449. Residue Y458 is modified to Phosphotyrosine. S468 is subject to Phosphoserine. The PDZ-binding signature appears at 497 to 499; that stretch reads TDV.

The protein belongs to the potassium channel family. A (Shaker) (TC 1.A.1.2) subfamily. Kv1.2/KCNA2 sub-subfamily. In terms of assembly, homotetramer and heterotetramer with other channel-forming alpha subunits, such as KCNA1, KCNA4, KCNA5, KCNA6 and KCNA7. Channel activity is regulated by interaction with the beta subunits, including KCNAB1 and KCNAB2. Identified in a complex with KCNA1 and KCNAB2. Identified in a complex with KCNA5 and KCNAB1. Identified in a complex with KCNA4 and FYN. Interacts with the beta subunit KCNAB1. Interacts with PTK2B. Interacts (via C-terminus) with CTTN. Interacts (via N-terminal cytoplasmic domain) with RHOA (GTP-bound form); this regulates channel activity by reducing location at the cell surface in response to CHRM1 activation. Interacts with DRD2. Interacts with SIGMAR1; cocaine consumption leads to increased interaction. Interacts with ADAM22. Interacts (via C-terminus) with the PDZ domains of DLG1, DLG2 and DLG4. Interacts with CNTNAP2. Interacts with ADAM11. Interacts with LYNX1. In terms of processing, phosphorylated on tyrosine residues; phosphorylation increases in response to ischemia. Phosphorylated on tyrosine residues by activated PTK2B/PYK2. Phosphorylation on tyrosine residues suppresses ion channel activity. Phosphorylated on tyrosine residues in response to CHRM1 activation; this abolishes interaction with CTTN. This is probably due to endocytosis of the phosphorylated channel subunits. Phosphorylated on serine residues in response to increased cAMP levels; phosphorylation is apparently not catalyzed by PKA. Post-translationally, N-glycosylated, with complex, sialylated N-glycans. In terms of tissue distribution, detected in brain cortex. Detected in peroneal nerve in the juxtaparanodal regions of the node of Ranvier; expression is decreased in patients with diabetes mellitus that suffer from axonal neuropathy. Detected in paranodal and juxtanodal zones in myelinated spinal cord (at protein level).

The protein localises to the cell membrane. It localises to the membrane. The protein resides in the cell projection. Its subcellular location is the axon. It is found in the synapse. The protein localises to the endoplasmic reticulum membrane. It localises to the lamellipodium membrane. The protein resides in the synaptosome. Its subcellular location is the presynaptic cell membrane. It is found in the dendrite. The protein localises to the cell junction. It localises to the paranodal septate junction. It catalyses the reaction K(+)(in) = K(+)(out). Its activity is regulated as follows. Inhibited by 4-aminopyridine (4-AP) and charybdotoxin (CTX), but not by tetraethylammonium (TEA). Inhibited by dendrotoxin (DTX). Inhibited by tityustoxin-K alpha (TsTX-Kalpha), a toxin that is highly specific for KCNA2. Inhibited by maurotoxin. Inhibited by kappaM conotoxins kappaM-RIIIJ and kappaM-RIIIK; kappaM-RIIIJ has much higher affinity for channels containing KCNA2 than kappaM-RIIIK, with the exception of heterodimers formed by KCNA2 and KCNA7 where the opposite is true. Its function is as follows. Voltage-gated potassium channel that mediates transmembrane potassium transport in excitable membranes, primarily in the brain and the central nervous system, but also in the cardiovascular system. Prevents aberrant action potential firing and regulates neuronal output. Forms tetrameric potassium-selective channels through which potassium ions pass in accordance with their electrochemical gradient. The channel alternates between opened and closed conformations in response to the voltage difference across the membrane. Can form functional homotetrameric channels and heterotetrameric channels that contain variable proportions of KCNA1, KCNA2, KCNA4, KCNA5, KCNA6, KCNA7, and possibly other family members as well; channel properties depend on the type of alpha subunits that are part of the channel. Channel properties are modulated by cytoplasmic beta subunits that regulate the subcellular location of the alpha subunits and promote rapid inactivation of delayed rectifier potassium channels. In vivo, membranes probably contain a mixture of heteromeric potassium channel complexes, making it difficult to assign currents observed in intact tissues to any particular potassium channel family member. Homotetrameric KCNA2 forms a delayed-rectifier potassium channel that opens in response to membrane depolarization, followed by slow spontaneous channel closure. In contrast, a heteromultimer formed by KCNA2 and KCNA4 shows rapid inactivation. Regulates neuronal excitability and plays a role as pacemaker in the regulation of neuronal action potentials. KCNA2-containing channels play a presynaptic role and prevent hyperexcitability and aberrant action potential firing. Response to toxins that are selective for KCNA2-containing potassium channels suggests that in Purkinje cells, dendritic subthreshold KCNA2-containing potassium channels prevent random spontaneous calcium spikes, suppressing dendritic hyperexcitability without hindering the generation of somatic action potentials, and thereby play an important role in motor coordination. Plays a role in the induction of long-term potentiation of neuron excitability in the CA3 layer of the hippocampus. May function as down-stream effector for G protein-coupled receptors and inhibit GABAergic inputs to basolateral amygdala neurons. May contribute to the regulation of neurotransmitter release, such as gamma-aminobutyric acid (GABA). Contributes to the regulation of the axonal release of the neurotransmitter dopamine. Reduced KCNA2 expression plays a role in the perception of neuropathic pain after peripheral nerve injury, but not acute pain. Plays a role in the regulation of the time spent in non-rapid eye movement (NREM) sleep. This chain is Potassium voltage-gated channel subfamily A member 2 (KCNA2), found in Homo sapiens (Human).